Reading from the N-terminus, the 59-residue chain is Ferredoxin-2 (59 aa).

4Fe-4S ferredoxin-type domains are found at residues 3 to 32 (YSVI…LQNG) and 33 to 59 (KAVP…AIVE). Positions 12, 15, 18, 22, 42, 45, 48, and 52 each coordinate [4Fe-4S] cluster.

As to quaternary structure, homodimer. [4Fe-4S] cluster serves as cofactor.

The protein resides in the periplasm. Its function is as follows. Ferredoxins are iron-sulfur proteins that transfer electrons in a wide variety of metabolic reactions. The sequence is that of Ferredoxin-2 from Desulfomicrobium norvegicum (strain DSM 1741 / NCIMB 8310) (Desulfovibrio baculatus (strain Norway 4)).